Here is a 247-residue protein sequence, read N- to C-terminus: ATP synthase subunit a, chloroplastic (247 aa).

5 consecutive transmembrane segments (helical) span residues 38 to 58, 95 to 115, 134 to 154, 199 to 219, and 220 to 240; these read QVLI…IIAV, VPFI…GALL, INTT…AGLS, LVVV…VMFL, and GLFT…AYIG.

This sequence belongs to the ATPase A chain family. As to quaternary structure, F-type ATPases have 2 components, CF(1) - the catalytic core - and CF(0) - the membrane proton channel. CF(1) has five subunits: alpha(3), beta(3), gamma(1), delta(1), epsilon(1). CF(0) has four main subunits: a, b, b' and c.

Its subcellular location is the plastid. It is found in the chloroplast thylakoid membrane. Key component of the proton channel; it plays a direct role in the translocation of protons across the membrane. This chain is ATP synthase subunit a, chloroplastic, found in Sorghum bicolor (Sorghum).